The chain runs to 333 residues: Biotin synthase (333 aa).

Positions 47-276 constitute a Radical SAM core domain; sequence FFKNQMEFCS…KSEIRLCGGR (230 aa). Cys-65, Cys-69, and Cys-72 together coordinate [4Fe-4S] cluster. The [2Fe-2S] cluster site is built by Cys-109, Cys-141, Cys-201, and Arg-271.

It belongs to the radical SAM superfamily. Biotin synthase family. Homodimer. The cofactor is [4Fe-4S] cluster. Requires [2Fe-2S] cluster as cofactor.

It carries out the reaction (4R,5S)-dethiobiotin + (sulfur carrier)-SH + 2 reduced [2Fe-2S]-[ferredoxin] + 2 S-adenosyl-L-methionine = (sulfur carrier)-H + biotin + 2 5'-deoxyadenosine + 2 L-methionine + 2 oxidized [2Fe-2S]-[ferredoxin]. The protein operates within cofactor biosynthesis; biotin biosynthesis; biotin from 7,8-diaminononanoate: step 2/2. Functionally, catalyzes the conversion of dethiobiotin (DTB) to biotin by the insertion of a sulfur atom into dethiobiotin via a radical-based mechanism. This chain is Biotin synthase, found in Sulfurihydrogenibium sp. (strain YO3AOP1).